A 237-amino-acid chain; its full sequence is RNA polymerase sigma-28 factor (237 aa).

The propeptide occupies M1–S19. The Polymerase core binding signature appears at D77 to I90. Residues Q197–I206 constitute a DNA-binding region (H-T-H motif).

The protein belongs to the sigma-70 factor family. Post-translationally, proteolytically cleaved in the N-terminus probably by a SpoIIGA homolog to yield the active peptide.

Functionally, sigma factors are initiation factors that promote the attachment of RNA polymerase to specific initiation sites and are then released. This sigma factor directs the transcription of crystal protein genes, a sporulation-regulated event. This Bacillus thuringiensis subsp. kurstaki protein is RNA polymerase sigma-28 factor (sigK).